The sequence spans 386 residues: Probable mannan endo-1,4-beta-mannosidase A (386 aa).

Residues Met-1 to Ala-21 form the signal peptide. Positions 95 and 207 each coordinate substrate. Residue Glu-208 is the Proton donor of the active site. Tyr-283 contributes to the substrate binding site. The active-site Nucleophile is the Glu-316. An N-linked (GlcNAc...) asparagine glycan is attached at Asn-336. Trp-346 provides a ligand contact to substrate.

It belongs to the glycosyl hydrolase 5 (cellulase A) family.

Its subcellular location is the secreted. It catalyses the reaction Random hydrolysis of (1-&gt;4)-beta-D-mannosidic linkages in mannans, galactomannans and glucomannans.. Its function is as follows. Endo-1,4-mannanase, a crucial enzyme for depolymerization of seed galactomannans and wood galactoglucomannans. In Aspergillus flavus (strain ATCC 200026 / FGSC A1120 / IAM 13836 / NRRL 3357 / JCM 12722 / SRRC 167), this protein is Probable mannan endo-1,4-beta-mannosidase A (manA).